Reading from the N-terminus, the 209-residue chain is Orotate phosphoribosyltransferase (209 aa).

5-phospho-alpha-D-ribose 1-diphosphate contacts are provided by residues Arg-96, Lys-100, His-102, and 122 to 130 (EDLISTGGS). Ser-126 contacts orotate.

The protein belongs to the purine/pyrimidine phosphoribosyltransferase family. PyrE subfamily. As to quaternary structure, homodimer. It depends on Mg(2+) as a cofactor.

It catalyses the reaction orotidine 5'-phosphate + diphosphate = orotate + 5-phospho-alpha-D-ribose 1-diphosphate. Its pathway is pyrimidine metabolism; UMP biosynthesis via de novo pathway; UMP from orotate: step 1/2. Catalyzes the transfer of a ribosyl phosphate group from 5-phosphoribose 1-diphosphate to orotate, leading to the formation of orotidine monophosphate (OMP). The chain is Orotate phosphoribosyltransferase from Cytophaga hutchinsonii (strain ATCC 33406 / DSM 1761 / CIP 103989 / NBRC 15051 / NCIMB 9469 / D465).